The following is a 358-amino-acid chain: Alanine racemase (358 aa).

The active-site Proton acceptor; specific for D-alanine is Lys-35. An N6-(pyridoxal phosphate)lysine modification is found at Lys-35. Arg-130 contributes to the substrate binding site. Tyr-255 serves as the catalytic Proton acceptor; specific for L-alanine. Met-303 serves as a coordination point for substrate.

It belongs to the alanine racemase family. Pyridoxal 5'-phosphate is required as a cofactor.

It catalyses the reaction L-alanine = D-alanine. It participates in amino-acid biosynthesis; D-alanine biosynthesis; D-alanine from L-alanine: step 1/1. In terms of biological role, catalyzes the interconversion of L-alanine and D-alanine. May also act on other amino acids. This Shewanella sp. (strain MR-4) protein is Alanine racemase (alr).